A 510-amino-acid polypeptide reads, in one-letter code: Bifunctional pantoate ligase/cytidylate kinase (510 aa).

Residues 1–276 (MKKVIIRKTE…CGETRLIDHV (276 aa)) form a pantoate--beta-alanine ligase region. 29–36 (MGNLHDGH) serves as a coordination point for ATP. Histidine 36 (proton donor) is an active-site residue. Glutamine 61 contributes to the (R)-pantoate binding site. Beta-alanine is bound at residue glutamine 61. ATP is bound at residue 150-153 (GEKD). A (R)-pantoate-binding site is contributed by glutamine 156. 187–190 (LSSR) lines the ATP pocket. The cytidylate kinase stretch occupies residues 277–510 (FLMKRRPIIA…DRIPKETEIK (234 aa)).

The protein in the N-terminal section; belongs to the pantothenate synthetase family. It in the C-terminal section; belongs to the cytidylate kinase family. Type 1 subfamily.

The protein localises to the cytoplasm. It carries out the reaction (R)-pantoate + beta-alanine + ATP = (R)-pantothenate + AMP + diphosphate + H(+). It catalyses the reaction CMP + ATP = CDP + ADP. The catalysed reaction is dCMP + ATP = dCDP + ADP. It functions in the pathway cofactor biosynthesis; (R)-pantothenate biosynthesis; (R)-pantothenate from (R)-pantoate and beta-alanine: step 1/1. Catalyzes the condensation of pantoate with beta-alanine in an ATP-dependent reaction via a pantoyl-adenylate intermediate. Functionally, catalyzes the transfer of a phosphate group from ATP to either CMP or dCMP to form CDP or dCDP and ADP, respectively. In Prochlorococcus marinus (strain MIT 9301), this protein is Bifunctional pantoate ligase/cytidylate kinase.